The following is a 184-amino-acid chain: Shikimate kinase (184 aa).

18–23 (GAGKTT) serves as a coordination point for ATP. Threonine 22 lines the Mg(2+) pocket. Residues aspartate 40, arginine 64, and glycine 86 each coordinate substrate. Residue arginine 124 coordinates ATP. Arginine 143 contributes to the substrate binding site. Residue glutamine 160 coordinates ATP.

Belongs to the shikimate kinase family. Monomer. The cofactor is Mg(2+).

Its subcellular location is the cytoplasm. It catalyses the reaction shikimate + ATP = 3-phosphoshikimate + ADP + H(+). It functions in the pathway metabolic intermediate biosynthesis; chorismate biosynthesis; chorismate from D-erythrose 4-phosphate and phosphoenolpyruvate: step 5/7. Functionally, catalyzes the specific phosphorylation of the 3-hydroxyl group of shikimic acid using ATP as a cosubstrate. The chain is Shikimate kinase from Chromobacterium violaceum (strain ATCC 12472 / DSM 30191 / JCM 1249 / CCUG 213 / NBRC 12614 / NCIMB 9131 / NCTC 9757 / MK).